Reading from the N-terminus, the 558-residue chain is Potassium-transporting ATPase potassium-binding subunit (558 aa).

Transmembrane regions (helical) follow at residues 1–21, 66–86, 127–147, 166–186, 245–265, 281–301, 327–347, 354–374, 377–397, 416–436, 482–502, and 531–551; these read MEIILFLTMMVMITYVFSGYL, FNGFMGFITFVLLIVQQWLFL, MIVMTYLMFTSSASGYAVCIA, IVRFIVRVLLPLSCLISILLM, IWSNFIEMGSMMLLPMSMLFL, ALILFVAMFFIFIAILTLTMW, FGAGLSALFTVITTAFTTGSV, LTPLGGLGPMVLMMLNVVFGG, VGLMNLLIYVLLTVFICSLMV, IVLVFLIHPILILVFSALAFM, ISTGIIMLLSRYIPIILQLMI, and IVFIVLLSGLTFIPVLLLGPI.

It belongs to the KdpA family. The system is composed of three essential subunits: KdpA, KdpB and KdpC.

Its subcellular location is the cell membrane. Part of the high-affinity ATP-driven potassium transport (or Kdp) system, which catalyzes the hydrolysis of ATP coupled with the electrogenic transport of potassium into the cytoplasm. This subunit binds the extracellular potassium ions and delivers the ions to the membrane domain of KdpB through an intramembrane tunnel. The sequence is that of Potassium-transporting ATPase potassium-binding subunit from Staphylococcus aureus (strain MSSA476).